The sequence spans 478 residues: MKTLTPSVEIFFFPYVGGGHQIPMIDAARMFASHGASSTILATPSTTPLFQKCITRDQKFGLPISIHTLSADVPQSDISVGPFLDTSALLEPLRQLLLQRRPHCIVVDMFHRWSGDVVYELGIPRTLFNGIGCFALCVQENLRHVAFKSVSTDSEPFLVPNIPDRIEMTMSQLPPFLRNPSGIPERWRGMKQLEEKSFGTLINSFYDLEPAYADLIKSKWGNKAWIVGPVSFCNRSKEDKTERGKPPTIDEQNCLNWLNSKKPSSVLYASFGSLARLPPEQLKEIAYGLEASEQSFIWVVGNILHNPSENKENGSGNWLPEGFEQRMKETGKGLVLRGWAPQLLILEHAAIKGFMTHCGWNSTLEGVSAGVPMITWPLTAEQFSNEKLITEVLKTGVQVGNREWWPWNAEWKGLVGREKVEVAVRKLMVESVEADEMRRRAKDIAGKAARAVEEGGTSYADVEALIQELQARTCANQG.

Residue histidine 20 is the Proton acceptor of the active site. Histidine 20 is an an anthocyanidin binding site. Aspartate 108 serves as the catalytic Charge relay. Residues alanine 340, glutamine 342, histidine 357, tryptophan 360, asparagine 361, serine 362, and glutamate 365 each contribute to the UDP-alpha-D-glucose site. Alanine 380 serves as a coordination point for an anthocyanidin. The UDP-alpha-D-glucose site is built by glutamate 381 and glutamine 382.

This sequence belongs to the UDP-glycosyltransferase family.

The catalysed reaction is 2-cis-(+)-abscisate + UDP-alpha-D-glucose = beta-D-glucopyranosyl cis-(+)-abscisate + UDP. Its function is as follows. Glucosyltransferase involved in the catabolism of abscisic acid (ABA). Adds a glucosyl group at the C-1 position of ABA; (S)-2-trans-abscisate is a better substrate than the natural (+)-S-abscisate or its enantiomer (-)-R-abscisate. No activity with (-)-phaseic acid (PA), methylated-ABA or with other hormones such as jasmonate, zeatin, auxin (IAA) or gibberellin A3 (GA3). This Phaseolus angularis (Azuki bean) protein is Abscisate beta-glucosyltransferase (AOG).